The primary structure comprises 295 residues: MNTIIEEYLNFIQIEKGLSNNTIGAYRRDLKKYKDYLEDNKISHIDFIDRQIIQECLGHLIDMGQSSKSLARFISTIRSFHQFALREKYAAKDPTVLIETPKYEKKLPDVLEIDEVIALLETPDLTKNNGYRDRTMLELLYATGMRVTEIIQLDVEDVNLIMGFVRVFGKGNKERIVPLGDTVIEYLTTYIETVRPQLLKQTTTQALFLNMHGKSLSRQGIWKIIKQYGLKANINKTLTPHTLRHSFATHLLENGADLRAVQEMLGHSDISTTQLYTHVSKSQIRKMYTQFHPRA.

The 85-residue stretch at 1-85 folds into the Core-binding (CB) domain; the sequence is MNTIIEEYLN…TIRSFHQFAL (85 aa). A Tyr recombinase domain is found at 106–289; that stretch reads KLPDVLEIDE…SKSQIRKMYT (184 aa). Active-site residues include Arg146, Lys170, His241, Arg244, and His267. Tyr276 serves as the catalytic O-(3'-phospho-DNA)-tyrosine intermediate.

The protein belongs to the 'phage' integrase family. XerD subfamily. As to quaternary structure, forms a cyclic heterotetrameric complex composed of two molecules of XerC and two molecules of XerD.

It is found in the cytoplasm. Site-specific tyrosine recombinase, which acts by catalyzing the cutting and rejoining of the recombining DNA molecules. The XerC-XerD complex is essential to convert dimers of the bacterial chromosome into monomers to permit their segregation at cell division. It also contributes to the segregational stability of plasmids. The chain is Tyrosine recombinase XerD from Staphylococcus epidermidis (strain ATCC 12228 / FDA PCI 1200).